The primary structure comprises 553 residues: Hydroxylamine reductase (553 aa).

[2Fe-2S] cluster contacts are provided by cysteine 3, cysteine 6, cysteine 18, and cysteine 25. Hybrid [4Fe-2O-2S] cluster is bound by residues histidine 252, glutamate 276, cysteine 320, cysteine 408, cysteine 436, cysteine 461, glutamate 495, and lysine 497. Cysteine 408 carries the cysteine persulfide modification.

This sequence belongs to the HCP family. It depends on [2Fe-2S] cluster as a cofactor. Hybrid [4Fe-2O-2S] cluster serves as cofactor.

It localises to the cytoplasm. It catalyses the reaction A + NH4(+) + H2O = hydroxylamine + AH2 + H(+). Catalyzes the reduction of hydroxylamine to form NH(3) and H(2)O. This chain is Hydroxylamine reductase, found in Vibrio vulnificus (strain YJ016).